Consider the following 127-residue polypeptide: Small ribosomal subunit protein uS13 (127 aa).

The interval 97–127 is disordered; sequence PVRGQRTRTNARTRRGGRKTVAGKKKAAAKK. Positions 101-127 are enriched in basic residues; that stretch reads QRTRTNARTRRGGRKTVAGKKKAAAKK.

Belongs to the universal ribosomal protein uS13 family. In terms of assembly, part of the 30S ribosomal subunit. Forms a loose heterodimer with protein S19. Forms two bridges to the 50S subunit in the 70S ribosome.

Functionally, located at the top of the head of the 30S subunit, it contacts several helices of the 16S rRNA. In the 70S ribosome it contacts the 23S rRNA (bridge B1a) and protein L5 of the 50S subunit (bridge B1b), connecting the 2 subunits; these bridges are implicated in subunit movement. Contacts the tRNAs in the A and P-sites. In Gloeobacter violaceus (strain ATCC 29082 / PCC 7421), this protein is Small ribosomal subunit protein uS13.